The primary structure comprises 69 residues: Probable Sec-independent protein translocase protein TatE (69 aa).

A helical transmembrane segment spans residues 1–21 (MEGISIAKLLVIGALIVLLFG). The tract at residues 45-69 (DDQPAAKSSAQDEHPAAISETRPKE) is disordered. The span at 54–69 (AQDEHPAAISETRPKE) shows a compositional bias: basic and acidic residues.

Belongs to the TatA/E family. TatE subfamily.

Its subcellular location is the cell inner membrane. In terms of biological role, part of the twin-arginine translocation (Tat) system that transports large folded proteins containing a characteristic twin-arginine motif in their signal peptide across membranes. TatE shares overlapping functions with TatA. The chain is Probable Sec-independent protein translocase protein TatE from Dickeya chrysanthemi (strain Ech1591) (Dickeya zeae (strain Ech1591)).